We begin with the raw amino-acid sequence, 617 residues long: Probable LRR receptor-like serine/threonine-protein kinase RKF3 (617 aa).

The first 20 residues, 1 to 20 (MLFLRRIAVVFFVFTSFSAA), serve as a signal peptide directing secretion. Topologically, residues 21–212 (QNSTCPLDFS…PTSSGANKVK (192 aa)) are extracellular. N-linked (GlcNAc...) asparagine glycosylation is found at asparagine 22, asparagine 124, asparagine 135, and asparagine 165. The chain crosses the membrane as a helical span at residues 213-233 (VLVSSFSVLLVASVLVITAWF). Over 234–617 (WYCRRKKSKL…DGPSGNTNTT (384 aa)) the chain is Cytoplasmic. The 281-residue stretch at 283 to 563 (FSRHNIIGRG…VKMLESNEFT (281 aa)) folds into the Protein kinase domain. Residues 289–297 (IGRGGYGNV) and lysine 311 contribute to the ATP site. The active-site Proton acceptor is the aspartate 412. Positions 585 to 617 (VSSSSGSGKLTSPTGYQAFSFGGDGPSGNTNTT) are disordered.

It belongs to the protein kinase superfamily. Ser/Thr protein kinase family. Expressed in the whole plant at low levels.

Its subcellular location is the cell membrane. The catalysed reaction is L-seryl-[protein] + ATP = O-phospho-L-seryl-[protein] + ADP + H(+). It catalyses the reaction L-threonyl-[protein] + ATP = O-phospho-L-threonyl-[protein] + ADP + H(+). This Arabidopsis thaliana (Mouse-ear cress) protein is Probable LRR receptor-like serine/threonine-protein kinase RKF3 (RKF3).